The primary structure comprises 211 residues: N-(5'-phosphoribosyl)anthranilate isomerase (211 aa).

This sequence belongs to the TrpF family.

The catalysed reaction is N-(5-phospho-beta-D-ribosyl)anthranilate = 1-(2-carboxyphenylamino)-1-deoxy-D-ribulose 5-phosphate. The protein operates within amino-acid biosynthesis; L-tryptophan biosynthesis; L-tryptophan from chorismate: step 3/5. The sequence is that of N-(5'-phosphoribosyl)anthranilate isomerase from Chromohalobacter salexigens (strain ATCC BAA-138 / DSM 3043 / CIP 106854 / NCIMB 13768 / 1H11).